We begin with the raw amino-acid sequence, 221 residues long: Large ribosomal subunit protein uL4 (221 aa).

A disordered region spans residues 48–77 (TASTKTRGEVSGGGRKPWIQKHTGRARQGS).

It belongs to the universal ribosomal protein uL4 family. As to quaternary structure, part of the 50S ribosomal subunit.

Its function is as follows. One of the primary rRNA binding proteins, this protein initially binds near the 5'-end of the 23S rRNA. It is important during the early stages of 50S assembly. It makes multiple contacts with different domains of the 23S rRNA in the assembled 50S subunit and ribosome. Forms part of the polypeptide exit tunnel. This chain is Large ribosomal subunit protein uL4, found in Thermosipho africanus (strain TCF52B).